We begin with the raw amino-acid sequence, 119 residues long: Large ribosomal subunit protein bL19 (119 aa).

The protein belongs to the bacterial ribosomal protein bL19 family.

Functionally, this protein is located at the 30S-50S ribosomal subunit interface and may play a role in the structure and function of the aminoacyl-tRNA binding site. The polypeptide is Large ribosomal subunit protein bL19 (Arthrobacter sp. (strain FB24)).